Reading from the N-terminus, the 92-residue chain is Small ribosomal subunit protein uS19 (92 aa).

The protein belongs to the universal ribosomal protein uS19 family.

In terms of biological role, protein S19 forms a complex with S13 that binds strongly to the 16S ribosomal RNA. This Bacillus licheniformis (strain ATCC 14580 / DSM 13 / JCM 2505 / CCUG 7422 / NBRC 12200 / NCIMB 9375 / NCTC 10341 / NRRL NRS-1264 / Gibson 46) protein is Small ribosomal subunit protein uS19.